Consider the following 820-residue polypeptide: Penicillin-binding protein 1A (820 aa).

A disordered region spans residues 1 to 120 (MNSDGRHHQS…PAGRLPQPRV (120 aa)). Basic and acidic residues predominate over residues 41-53 (TDDRSAPHADSIE). A helical membrane pass occupies residues 139-159 (LTAAVVILLPMVTFTMAYLIV). The tract at residues 180–360 (GSEIAKIVPP…RWNWVLDGMV (181 aa)) is transglycosylase. Glu213 serves as the catalytic Proton donor; for transglycosylase activity. The segment at 453–743 (AVVSIDPHNG…PSDIWKATMD (291 aa)) is transpeptidase. Ser487 (acyl-ester intermediate; for transpeptidase activity) is an active-site residue. Positions 792-804 (ITIPIGPPTTITL) are enriched in low complexity. Positions 792–820 (ITIPIGPPTTITLAPPPPAPPAATPTPPP) are disordered. Positions 805–820 (APPPPAPPAATPTPPP) are enriched in pro residues.

It in the N-terminal section; belongs to the glycosyltransferase 51 family. This sequence in the C-terminal section; belongs to the transpeptidase family. In terms of assembly, interacts with RipA via its transpeptidase domain (residues 561-820).

The protein resides in the cell membrane. It carries out the reaction [GlcNAc-(1-&gt;4)-Mur2Ac(oyl-L-Ala-gamma-D-Glu-L-Lys-D-Ala-D-Ala)](n)-di-trans,octa-cis-undecaprenyl diphosphate + beta-D-GlcNAc-(1-&gt;4)-Mur2Ac(oyl-L-Ala-gamma-D-Glu-L-Lys-D-Ala-D-Ala)-di-trans,octa-cis-undecaprenyl diphosphate = [GlcNAc-(1-&gt;4)-Mur2Ac(oyl-L-Ala-gamma-D-Glu-L-Lys-D-Ala-D-Ala)](n+1)-di-trans,octa-cis-undecaprenyl diphosphate + di-trans,octa-cis-undecaprenyl diphosphate + H(+). The enzyme catalyses Preferential cleavage: (Ac)2-L-Lys-D-Ala-|-D-Ala. Also transpeptidation of peptidyl-alanyl moieties that are N-acyl substituents of D-alanine.. It participates in cell wall biogenesis; peptidoglycan biosynthesis. Cell wall formation. Synthesis of cross-linked peptidoglycan from the lipid intermediates. The enzyme has a penicillin-insensitive transglycosylase N-terminal domain (formation of linear glycan strands) and a penicillin-sensitive transpeptidase C-terminal domain (cross-linking of the peptide subunits). Has little peptidoglycan hydrolytic activity; however it inhibits the synergistic peptidoglycan hydrolysis of RipA plus RpfB. This is Penicillin-binding protein 1A (ponA1) from Mycobacterium tuberculosis (strain ATCC 25618 / H37Rv).